We begin with the raw amino-acid sequence, 447 residues long: MNAWEVNFDGLVGLTHHYAGLSFGNEASTRHRFQVSNPRQAAKQGLLKMKALADAGFPQAVIPPHERPFIPVLRQLGFSGSDEQVLEKVARQAPHWLSSVSSASPMWVANAATIAPSADTLDGKVHLTVANLNNKFHRSLEAHVTESLLKAIFNDEEKFSVHSALPQVALLGDEGAANHNRLGGHYGEPGMQLFVYGREEGNDTRPSRYPARQTREASEAVARLNQVNPQQVIFAQQNPDVIDQGVFHNDVIAVSNRQVLFCHQQAFARQSQLLANLRARVNGFMAIEVPATQVSVSDAVSTYLFNSQLLSRDDGSMMLVLPQECREHAGVWGYLNELLAADNPISELKVFDLRESMANGGGPACLRLRVVLTEEERRAVNPAVMMNDTLFNALNDWVDRYYRDRLTAADLADPQLLRGGREALDVLSQLLNLGSVYPFQREGGGNG.

Substrate is bound by residues 19–28 (AGLSFGNEAS), N110, and 137–138 (HR). E174 is an active-site residue. Position 212 (R212) interacts with substrate. The active site involves H248. 2 residues coordinate substrate: D250 and N359. The active-site Nucleophile is the C365.

It belongs to the succinylarginine dihydrolase family. In terms of assembly, homodimer.

It catalyses the reaction N(2)-succinyl-L-arginine + 2 H2O + 2 H(+) = N(2)-succinyl-L-ornithine + 2 NH4(+) + CO2. Its pathway is amino-acid degradation; L-arginine degradation via AST pathway; L-glutamate and succinate from L-arginine: step 2/5. In terms of biological role, catalyzes the hydrolysis of N(2)-succinylarginine into N(2)-succinylornithine, ammonia and CO(2). This Escherichia coli (strain SE11) protein is N-succinylarginine dihydrolase.